Here is a 341-residue protein sequence, read N- to C-terminus: MSYLMMDLAGLTVSATETAQLQHPQVGGIILFSRNCENKNQLIELVKSVRSIRPELLIAVDHEGGRVQRFREGFSLIPAMGDILPAAKGDLTLAKQWAKECGFLMAVELLACDIDLSFAPVLDVNGISEVIGKRSFSAVPDEVSALAQQFIIGMNEAGMAAVGKHFPGHGSVAADSHIAMPVDPRTKEQVEAFDMQPFKHLIGSQQLQGVMPAHVVYSNIDPNPAGFSSYWLQTILRQQLGFDGVIFSDDLGMKGASFAGNYLGRAKAALDAGCDMILVCNDSVGVNALLTEFDWPAAEPTHTALSLKGNTAQASQALEQQTRWQAAQLLAMDITRIAQSL.

Substrate is bound by residues Asp-61, Arg-69, Arg-134, and 164-165 (KH). The Proton donor/acceptor role is filled by His-177. Catalysis depends on Asp-249, which acts as the Nucleophile.

It belongs to the glycosyl hydrolase 3 family. NagZ subfamily.

Its subcellular location is the cytoplasm. The catalysed reaction is Hydrolysis of terminal non-reducing N-acetyl-D-hexosamine residues in N-acetyl-beta-D-hexosaminides.. It participates in cell wall biogenesis; peptidoglycan recycling. Plays a role in peptidoglycan recycling by cleaving the terminal beta-1,4-linked N-acetylglucosamine (GlcNAc) from peptide-linked peptidoglycan fragments, giving rise to free GlcNAc, anhydro-N-acetylmuramic acid and anhydro-N-acetylmuramic acid-linked peptides. The protein is Beta-hexosaminidase of Shewanella frigidimarina (strain NCIMB 400).